A 68-amino-acid chain; its full sequence is DNA-directed RNA polymerase subunit omega (68 aa).

It belongs to the RNA polymerase subunit omega family. In terms of assembly, the RNAP catalytic core consists of 2 alpha, 1 beta, 1 beta' and 1 omega subunit. When a sigma factor is associated with the core the holoenzyme is formed, which can initiate transcription.

It catalyses the reaction RNA(n) + a ribonucleoside 5'-triphosphate = RNA(n+1) + diphosphate. Promotes RNA polymerase assembly. Latches the N- and C-terminal regions of the beta' subunit thereby facilitating its interaction with the beta and alpha subunits. This chain is DNA-directed RNA polymerase subunit omega, found in Syntrophotalea carbinolica (strain DSM 2380 / NBRC 103641 / GraBd1) (Pelobacter carbinolicus).